Consider the following 94-residue polypeptide: Acylphosphatase (94 aa).

An Acylphosphatase-like domain is found at 7 to 94 (AVRVRISGRV…NMPRDFRITG (88 aa)). Active-site residues include Arg-22 and Asn-40.

It belongs to the acylphosphatase family.

It carries out the reaction an acyl phosphate + H2O = a carboxylate + phosphate + H(+). This is Acylphosphatase (acyP) from Rhizobium etli (strain ATCC 51251 / DSM 11541 / JCM 21823 / NBRC 15573 / CFN 42).